A 287-amino-acid polypeptide reads, in one-letter code: Ribosomal RNA-processing protein 8 (287 aa).

The segment at 1–62 (MTTEENKTSR…SAPSKRPKPS (62 aa)) is disordered. Basic residues predominate over residues 9–21 (SRNRKRKRQRNPK). A compositionally biased stretch (basic and acidic residues) spans 35-46 (QNEKKNQRDTKN). Residues histidine 107, glycine 142, aspartate 160, aspartate 172, methionine 173, and cysteine 189 each coordinate S-adenosyl-L-methionine.

This sequence belongs to the methyltransferase superfamily. RRP8 family.

The protein localises to the nucleus. The protein resides in the nucleolus. Its function is as follows. Probable methyltransferase required to silence rDNA. The protein is Ribosomal RNA-processing protein 8 of Arabidopsis thaliana (Mouse-ear cress).